Here is a 389-residue protein sequence, read N- to C-terminus: Protein CysO (389 aa).

K127 bears the N6-(pyridoxal phosphate)lysine mark. Pyridoxal 5'-phosphate-binding positions include N155, 261-265 (GTSGH), and S341.

The protein belongs to the cysteine synthase/cystathionine beta-synthase family. In terms of assembly, homodimer. Requires pyridoxal 5'-phosphate as cofactor.

It carries out the reaction O-acetyl-L-serine + hydrogen sulfide = L-cysteine + acetate. It catalyses the reaction O-phospho-L-serine + hydrogen sulfide + H(+) = L-cysteine + phosphate. The catalysed reaction is L-homocysteine + L-serine = L,L-cystathionine + H2O. The protein operates within amino-acid biosynthesis; L-cysteine biosynthesis; L-cysteine from L-serine: step 2/2. In terms of biological role, cysteine synthase that can also catalyze the synthesis of S-sulfo-L-cysteine from thiosulfate and O(3)-acetyl-L-serine, as well as the sulfhydrylation of L-serine by sulfide. In Aeropyrum pernix (strain ATCC 700893 / DSM 11879 / JCM 9820 / NBRC 100138 / K1), this protein is Protein CysO (cysO).